The following is a 353-amino-acid chain: MKIVVIGAGAWGTALAVNTAGAVEAAGSDAPRHQVTLWARDAALVKAMQAERANTRYLPGVALPGNLLLQGGGETSLAEAVSGQDLIILATPVSAARGLLQSLQQASVPVVWLSKGFEAPVAAVPHSAPSLASFGLMVHEIRAQVATDLRAGILSGPSFALEVARGQPTALVAASEHAEVRDALVAAFHGTSLRIYASDDIVGVEVGGAVKNVLAIATGLCDGLQLGLNARAALITRGLAEMTRLGVTLGARAETFTGLSGLGDLVLTATGDLSRNRKVGLQLAQGKTLAEAVKSLGHVAEGVYCARTVVQRAAGLGVDMPIAQSVVALLDGKLRPAEAVAALMGRGPTTELA.

NADPH is bound by residues tryptophan 11, arginine 40, and lysine 115. Lysine 115, glycine 156, and serine 158 together coordinate sn-glycerol 3-phosphate. Residue alanine 160 coordinates NADPH. Sn-glycerol 3-phosphate contacts are provided by lysine 211, aspartate 264, serine 274, arginine 275, and asparagine 276. Residue lysine 211 is the Proton acceptor of the active site. Residue arginine 275 coordinates NADPH. NADPH contacts are provided by valine 299 and glutamate 301.

The protein belongs to the NAD-dependent glycerol-3-phosphate dehydrogenase family.

The protein localises to the cytoplasm. It carries out the reaction sn-glycerol 3-phosphate + NAD(+) = dihydroxyacetone phosphate + NADH + H(+). The catalysed reaction is sn-glycerol 3-phosphate + NADP(+) = dihydroxyacetone phosphate + NADPH + H(+). It participates in membrane lipid metabolism; glycerophospholipid metabolism. Its function is as follows. Catalyzes the reduction of the glycolytic intermediate dihydroxyacetone phosphate (DHAP) to sn-glycerol 3-phosphate (G3P), the key precursor for phospholipid synthesis. In Polaromonas sp. (strain JS666 / ATCC BAA-500), this protein is Glycerol-3-phosphate dehydrogenase [NAD(P)+].